Reading from the N-terminus, the 387-residue chain is MANNDFLFTSESVSEGHPDKVADQISDAILDAIFTQDPNARVAAETLCNTGLVVLAGEITTTANVDYIQVARDTIRRIGYDNTDYGIDYKGCAVLVAYDKQSPDIAQGVDRKSEDYLNQGAGDQGLMFGYACDETPDLMPAPIWYAHRLVQRQSELRKDGRLPWLRPDAKSQVTFRYVDGRPVEVDTVVLSTQHAPEISQSAIHEAVIEDIIKPSFPEGLITPRTKFLVNPTGRFVIGGPQGDCGLTGRKIIVDTYGGACPHGGGAFSGKDPSKVDRSAAYAARYVAKNVVAAGLARQCQVQVSYAIGVAEPINITVYTEGTGVIPDEQIAKLVREHFDLRPKGIVNMLDLLRPIYAKTAAYGHFGRAEPEFSWEATDKALELKKSA.

His17 lines the ATP pocket. Asp19 contacts Mg(2+). Glu45 is a binding site for K(+). L-methionine contacts are provided by Glu58 and Gln101. The flexible loop stretch occupies residues Gln101–Arg111. ATP contacts are provided by residues Asp168 to Lys170, Arg234 to Phe235, Asp243, Arg249 to Lys250, Ala266, and Lys270. Asp243 serves as a coordination point for L-methionine. Lys274 provides a ligand contact to L-methionine.

It belongs to the AdoMet synthase family. As to quaternary structure, homotetramer; dimer of dimers. It depends on Mg(2+) as a cofactor. K(+) serves as cofactor.

The protein resides in the cytoplasm. It carries out the reaction L-methionine + ATP + H2O = S-adenosyl-L-methionine + phosphate + diphosphate. It functions in the pathway amino-acid biosynthesis; S-adenosyl-L-methionine biosynthesis; S-adenosyl-L-methionine from L-methionine: step 1/1. Functionally, catalyzes the formation of S-adenosylmethionine (AdoMet) from methionine and ATP. The overall synthetic reaction is composed of two sequential steps, AdoMet formation and the subsequent tripolyphosphate hydrolysis which occurs prior to release of AdoMet from the enzyme. In Bordetella petrii (strain ATCC BAA-461 / DSM 12804 / CCUG 43448), this protein is S-adenosylmethionine synthase.